The primary structure comprises 342 residues: Dof zinc finger protein DOF4.6 (342 aa).

The disordered stretch occupies residues 21 to 54 (NTCPKPQPQPLQPQQPPSVGGERKARPEKDQAVN). The segment covering 25 to 36 (KPQPQPLQPQQP) has biased composition (pro residues). Basic and acidic residues predominate over residues 41 to 51 (GERKARPEKDQ). A Dof-type zinc finger spans residues 53–107 (VNCPRCNSTNTKFCYYNNYSLTQPRYFCKGCRRYWTEGGSLRNIPVGGGSRKNKR). Zn(2+) is bound by residues Cys-55, Cys-58, Cys-80, and Cys-83. Residues 94–136 (RNIPVGGGSRKNKRSHSSSSDISNNHSDSTQPATKKHLSDHHH) are disordered. Residues 110 to 122 (SSSSDISNNHSDS) are compositionally biased toward low complexity. Residues 127–136 (TKKHLSDHHH) are compositionally biased toward basic residues.

In terms of tissue distribution, accumulates in the stele.

It is found in the nucleus. In terms of biological role, transcription factor that binds specifically to a 5'-AA[AG]G-3' consensus core sequence. This chain is Dof zinc finger protein DOF4.6, found in Arabidopsis thaliana (Mouse-ear cress).